The following is a 297-amino-acid chain: uncharacterized protein (297 aa).

The region spanning 1-60 is the HTH lysR-type domain; the sequence is MNIELRHLRYFVAVAEELHFGRAAARLNISQPPLSQQIQALEQQIGARLLARTNRSVLLT. The H-T-H motif DNA-binding region spans 20-40; the sequence is FGRAAARLNISQPPLSQQIQA.

It belongs to the LysR transcriptional regulatory family.

This is an uncharacterized protein from Escherichia coli (strain K12).